Consider the following 642-residue polypeptide: Aryl hydrocarbon receptor nuclear translocator homolog (642 aa).

The 54-residue stretch at 13–66 (ASRENHCEIERRRRNKMTAYITELSDMVPTCSALARKPDKLTILRMAVAHMKAL) folds into the bHLH domain. PAS domains follow at residues 85 to 156 (DQEL…ESQN) and 271 to 341 (TAAN…LKQK). A PAC domain is found at 346–389 (SLLYRARAKNSEYVWLRTQAYAFLNPYTDEVEYIVCTNSSGKTM). The tract at residues 450 to 612 (QAPTPQQQQQ…GPAGAGQPQG (163 aa)) is disordered. Polar residues-rich tracts occupy residues 463 to 482 (RPGS…THSP) and 528 to 554 (YQYQ…NGNR). Over residues 555–564 (QQAQPGAYQA) the composition is skewed to low complexity.

As to quaternary structure, efficient DNA binding requires dimerization with another bHLH protein. Heterodimer with ahr, trh or sim. At stage 11, expression is detected in tracheal pits. At later stages, strong expression is also detected in the CNS.

The protein localises to the nucleus. In terms of biological role, heterodimers of tgo/trh are involved in the control of breathless expression. Plays a role in the cellular or tissue response to oxygen deprivation. In Drosophila melanogaster (Fruit fly), this protein is Aryl hydrocarbon receptor nuclear translocator homolog (tgo).